A 148-amino-acid polypeptide reads, in one-letter code: Glycine cleavage system H protein 5 (148 aa).

The 83-residue stretch at 33 to 115 (VFTIGLTSVA…YGQGWIAKVK (83 aa)) folds into the Lipoyl-binding domain. Lys74 carries the N6-lipoyllysine modification.

The protein belongs to the GcvH family. In terms of assembly, the glycine cleavage system is composed of four proteins: P, T, L and H. (R)-lipoate is required as a cofactor.

In terms of biological role, the glycine cleavage system catalyzes the degradation of glycine. The H protein shuttles the methylamine group of glycine from the P protein to the T protein. This chain is Glycine cleavage system H protein 5, found in Aquifex aeolicus (strain VF5).